We begin with the raw amino-acid sequence, 78 residues long: UPF0154 protein SSU98_1719 (78 aa).

The chain crosses the membrane as a helical span at residues 3–23 (LGLAILLIVLAFAGGVALGIY).

It belongs to the UPF0154 family.

The protein localises to the cell membrane. The protein is UPF0154 protein SSU98_1719 of Streptococcus suis (strain 98HAH33).